A 196-amino-acid chain; its full sequence is Corticoliberin (196 aa).

Residues 1-24 (MRLPLLLSAGVLLVVSLPCPPCRA) form the signal peptide. Residues 25–153 (LLSRGPIPGA…RQETPERERR (129 aa)) constitute a propeptide that is removed on maturation. Residues 122–158 (PRRQLDSPAGPAERGEENALGSRQETPERERRSEEPP) form a disordered region. A compositionally biased stretch (basic and acidic residues) spans 146-156 (ETPERERRSEE). Isoleucine 194 carries the post-translational modification Isoleucine amide.

The protein belongs to the sauvagine/corticotropin-releasing factor/urotensin I family. Interacts (via C-terminus) with CRFR1 (via N-terminal extracellular domain). Produced by the hypothalamus.

Its subcellular location is the secreted. Its function is as follows. Hormone regulating the release of corticotropin from pituitary gland. Induces NLRP6 in intestinal epithelial cells, hence may influence gut microbiota profile. In Canis lupus familiaris (Dog), this protein is Corticoliberin (CRH).